A 212-amino-acid chain; its full sequence is Holliday junction branch migration complex subunit RuvA (212 aa).

The segment at Met-1–Ser-70 is domain I. Positions Thr-71–Val-149 are domain II. Residues Thr-150–Ile-160 form a flexible linker region. The tract at residues Ile-160–Thr-212 is domain III.

The protein belongs to the RuvA family. In terms of assembly, homotetramer. Forms an RuvA(8)-RuvB(12)-Holliday junction (HJ) complex. HJ DNA is sandwiched between 2 RuvA tetramers; dsDNA enters through RuvA and exits via RuvB. An RuvB hexamer assembles on each DNA strand where it exits the tetramer. Each RuvB hexamer is contacted by two RuvA subunits (via domain III) on 2 adjacent RuvB subunits; this complex drives branch migration. In the full resolvosome a probable DNA-RuvA(4)-RuvB(12)-RuvC(2) complex forms which resolves the HJ.

Its subcellular location is the cytoplasm. Its function is as follows. The RuvA-RuvB-RuvC complex processes Holliday junction (HJ) DNA during genetic recombination and DNA repair, while the RuvA-RuvB complex plays an important role in the rescue of blocked DNA replication forks via replication fork reversal (RFR). RuvA specifically binds to HJ cruciform DNA, conferring on it an open structure. The RuvB hexamer acts as an ATP-dependent pump, pulling dsDNA into and through the RuvAB complex. HJ branch migration allows RuvC to scan DNA until it finds its consensus sequence, where it cleaves and resolves the cruciform DNA. The chain is Holliday junction branch migration complex subunit RuvA from Crocosphaera subtropica (strain ATCC 51142 / BH68) (Cyanothece sp. (strain ATCC 51142)).